The following is a 386-amino-acid chain: Alpha-D-kanosaminyltransferase (386 aa).

It belongs to the glycosyltransferase group 1 family.

It carries out the reaction 2'-deamino-2'-hydroxyneamine + UDP-alpha-D-kanosamine = kanamycin A + UDP + H(+). The catalysed reaction is neamine + UDP-alpha-D-kanosamine = kanamycin B + UDP + H(+). The enzyme catalyses paromamine + UDP-alpha-D-kanosamine = kanamycin C + UDP + H(+). It catalyses the reaction 2'-deamino-2'-hydroxyparomamine + UDP-alpha-D-kanosamine = kanamycin X + UDP + H(+). Its pathway is antibiotic biosynthesis; kanamycin biosynthesis. Functionally, glycosyltransferase involved in the biosynthesis of kanamycins by catalyzing the transfer of the hexose kanosamine from UDP-alpha-D-kanosamine to disaccharide precursors. Can also use UDP-alpha-D-glucose as sugar donor with much lower efficiency. The chain is Alpha-D-kanosaminyltransferase (kanE) from Streptomyces kanamyceticus.